We begin with the raw amino-acid sequence, 118 residues long: UPF0295 protein BCE33L0445 (118 aa).

2 helical membrane passes run 12 to 32 (IRTF…LGVF) and 43 to 63 (FMMV…WIGM).

The protein belongs to the UPF0295 family.

It localises to the cell membrane. The protein is UPF0295 protein BCE33L0445 of Bacillus cereus (strain ZK / E33L).